The chain runs to 302 residues: L-glutamate/L-aspartate-binding protein (302 aa).

An N-terminal signal peptide occupies residues 1–23 (MRIAPSLLSTAIVAALLSAPVVA).

This sequence belongs to the bacterial solute-binding protein 3 family.

The protein localises to the periplasm. In terms of biological role, binds L-glutamate and L-aspartate. This Pseudomonas aeruginosa (strain ATCC 15692 / DSM 22644 / CIP 104116 / JCM 14847 / LMG 12228 / 1C / PRS 101 / PAO1) protein is L-glutamate/L-aspartate-binding protein.